Consider the following 429-residue polypeptide: Glucose-1-phosphate adenylyltransferase (429 aa).

Alpha-D-glucose 1-phosphate-binding positions include Gly-162, 177 to 178 (EK), and Ser-209.

The protein belongs to the bacterial/plant glucose-1-phosphate adenylyltransferase family. Homotetramer.

The enzyme catalyses alpha-D-glucose 1-phosphate + ATP + H(+) = ADP-alpha-D-glucose + diphosphate. Its pathway is glycan biosynthesis; glycogen biosynthesis. Involved in the biosynthesis of ADP-glucose, a building block required for the elongation reactions to produce glycogen. Catalyzes the reaction between ATP and alpha-D-glucose 1-phosphate (G1P) to produce pyrophosphate and ADP-Glc. The protein is Glucose-1-phosphate adenylyltransferase of Nostoc punctiforme (strain ATCC 29133 / PCC 73102).